The primary structure comprises 226 residues: NAD(P)H-hydrate epimerase (226 aa).

Positions 10 to 215 (AIELDLDLFE…ALQRKYQLNL (206 aa)) constitute a YjeF N-terminal domain. 58–62 (NNGGD) lines the (6S)-NADPHX pocket. K(+)-binding residues include N59 and D123. (6S)-NADPHX-binding positions include 127–133 (GFGFKPP) and D156. S159 lines the K(+) pocket.

Belongs to the NnrE/AIBP family. The cofactor is K(+).

It catalyses the reaction (6R)-NADHX = (6S)-NADHX. It carries out the reaction (6R)-NADPHX = (6S)-NADPHX. Functionally, catalyzes the epimerization of the S- and R-forms of NAD(P)HX, a damaged form of NAD(P)H that is a result of enzymatic or heat-dependent hydration. This is a prerequisite for the S-specific NAD(P)H-hydrate dehydratase to allow the repair of both epimers of NAD(P)HX. This Drosophila persimilis (Fruit fly) protein is NAD(P)H-hydrate epimerase.